Consider the following 285-residue polypeptide: Eukaryotic translation initiation factor 3 subunit F-2 (285 aa).

Positions 11–145 (VFLKPLVLFQ…TRLYCAVEMG (135 aa)) constitute an MPN domain.

This sequence belongs to the eIF-3 subunit F family. Component of the eukaryotic translation initiation factor 3 (eIF-3) complex. The eIF-3 complex interacts with pix.

The protein localises to the cytoplasm. Its function is as follows. Component of the eukaryotic translation initiation factor 3 (eIF-3) complex, which is involved in protein synthesis of a specialized repertoire of mRNAs and, together with other initiation factors, stimulates binding of mRNA and methionyl-tRNAi to the 40S ribosome. The eIF-3 complex specifically targets and initiates translation of a subset of mRNAs involved in cell proliferation. In Drosophila simulans (Fruit fly), this protein is Eukaryotic translation initiation factor 3 subunit F-2.